Consider the following 392-residue polypeptide: Phospho-N-acetylmuramoyl-pentapeptide-transferase (392 aa).

The next 10 helical transmembrane spans lie at 29–49, 76–96, 100–120, 137–157, 193–213, 225–245, 262–282, 289–309, 314–334, and 369–389; these read AVMAALTALLIGLLAGPFVIR, TMGGVLILMSIGISTLLWFDL, FVWIVLLVTLGFGAIGWADDW, YLWQSLIGLVAALYLVFSISE, ISYPLGVFGFVILTYLVIVGS, GLAIMPVVMVGSALGVFAYVT, SGELLIFCSAMAGAGLAFLWF, VFMGDVGALALGAALGTIAVI, IVLAIMGGIFVVEALSVMMQV, and QVVVRFWIITMLLCLVGLSTL.

This sequence belongs to the glycosyltransferase 4 family. MraY subfamily. The cofactor is Mg(2+).

The protein localises to the cell inner membrane. It carries out the reaction UDP-N-acetyl-alpha-D-muramoyl-L-alanyl-gamma-D-glutamyl-meso-2,6-diaminopimeloyl-D-alanyl-D-alanine + di-trans,octa-cis-undecaprenyl phosphate = di-trans,octa-cis-undecaprenyl diphospho-N-acetyl-alpha-D-muramoyl-L-alanyl-D-glutamyl-meso-2,6-diaminopimeloyl-D-alanyl-D-alanine + UMP. The protein operates within cell wall biogenesis; peptidoglycan biosynthesis. Functionally, catalyzes the initial step of the lipid cycle reactions in the biosynthesis of the cell wall peptidoglycan: transfers peptidoglycan precursor phospho-MurNAc-pentapeptide from UDP-MurNAc-pentapeptide onto the lipid carrier undecaprenyl phosphate, yielding undecaprenyl-pyrophosphoryl-MurNAc-pentapeptide, known as lipid I. The chain is Phospho-N-acetylmuramoyl-pentapeptide-transferase from Polaromonas sp. (strain JS666 / ATCC BAA-500).